A 102-amino-acid chain; its full sequence is Small ribosomal subunit protein uS10 (102 aa).

It belongs to the universal ribosomal protein uS10 family. In terms of assembly, part of the 30S ribosomal subunit.

In terms of biological role, involved in the binding of tRNA to the ribosomes. The chain is Small ribosomal subunit protein uS10 from Sulfurisphaera tokodaii (strain DSM 16993 / JCM 10545 / NBRC 100140 / 7) (Sulfolobus tokodaii).